Reading from the N-terminus, the 436-residue chain is UDP-N-acetylmuramate--L-alanine ligase (436 aa).

108–114 is a binding site for ATP; that stretch reads GAHGKTS.

It belongs to the MurCDEF family.

The protein resides in the cytoplasm. It carries out the reaction UDP-N-acetyl-alpha-D-muramate + L-alanine + ATP = UDP-N-acetyl-alpha-D-muramoyl-L-alanine + ADP + phosphate + H(+). The protein operates within cell wall biogenesis; peptidoglycan biosynthesis. Functionally, cell wall formation. This Bacillus cereus (strain ZK / E33L) protein is UDP-N-acetylmuramate--L-alanine ligase.